The chain runs to 87 residues: uncharacterized protein (87 aa).

This is an uncharacterized protein from Enterobacteria phage T4 (Bacteriophage T4).